The following is a 145-amino-acid chain: MGVASQSSVANEAGAAPEASIQQTLRGFSSPTSLLLRIATAVLCTLTLAFLVTSKERKEIASIDIVAIWSNSKALIFLAVVSGICLGYSLLHAAVFLVMLSGNRKPLARKKALDWMVFLADQVFFKIFCWFSIRVSSRRSKAGFV.

Over methionine 1 to proline 31 the chain is Cytoplasmic. The chain crosses the membrane as a helical span at residues threonine 32–valine 52. Residues threonine 53–leucine 75 are Extracellular-facing. Residues isoleucine 76–phenylalanine 96 traverse the membrane as a helical segment. Over leucine 97 to alanine 112 the chain is Cytoplasmic. The chain crosses the membrane as a helical span at residues leucine 113–isoleucine 133. Over arginine 134–valine 145 the chain is Extracellular.

This sequence belongs to the Casparian strip membrane proteins (CASP) family. As to quaternary structure, homodimer and heterodimers.

It localises to the cell membrane. This is CASP-like protein SELMODRAFT_406854 from Selaginella moellendorffii (Spikemoss).